We begin with the raw amino-acid sequence, 611 residues long: Leukotriene A-4 hydrolase (611 aa).

Position 73 is an N6-acetyllysine (K73). Residues 135 to 137 and 267 to 272 contribute to the a peptide site; these read QCQ and SYGGME. H296 is a binding site for Zn(2+). E297 functions as the Proton acceptor in the catalytic mechanism. Zn(2+)-binding residues include H300 and E319. The residue at position 337 (K337) is an N6-acetyllysine. Residue Y384 is the Proton donor of the active site. Residue K414 is modified to N6-acetyllysine. At S416 the chain carries Phosphoserine. Residue 564-566 participates in a peptide binding; the sequence is RMK. At K573 the chain carries N6-acetyllysine.

It belongs to the peptidase M1 family. In terms of assembly, monomer. The cofactor is Zn(2+). Post-translationally, phosphorylation at Ser-416 inhibits leukotriene-A4 hydrolase activity. activity.

Its subcellular location is the cytoplasm. It carries out the reaction leukotriene A4 + H2O = leukotriene B4. The catalysed reaction is (5S,6S)-epoxy-(18R)-hydroxy-(7E,9E,11Z,14Z,16E)-eicosapentaenoate + H2O = resolvin E1. The enzyme catalyses (5S,6S)-epoxy-(18S)-hydroxy-(7E,9E,11Z,14Z,16E)-eicosapentaenoate + H2O = 18S-resolvin E1. It catalyses the reaction Release of the N-terminal residue from a tripeptide.. The protein operates within lipid metabolism; leukotriene B4 biosynthesis. Its activity is regulated as follows. Inhibited by bestatin. The epoxide hydrolase activity is restrained by suicide inactivation that involves binding of LTA4 to Tyr-379. 4-(4-benzylphenyl)thiazol-2-amine (ARM1) selectively inhibits the epoxide hydrolase activity. Its function is as follows. Bifunctional zinc metalloenzyme that comprises both epoxide hydrolase (EH) and aminopeptidase activities. Acts as an epoxide hydrolase to catalyze the conversion of LTA4 to the pro-inflammatory mediator leukotriene B4 (LTB4). Also has aminopeptidase activity, with high affinity for N-terminal arginines of various synthetic tripeptides. In addition to its pro-inflammatory EH activity, may also counteract inflammation by its aminopeptidase activity, which inactivates by cleavage another neutrophil attractant, the tripeptide Pro-Gly-Pro (PGP), a bioactive fragment of collagen generated by the action of matrix metalloproteinase-9 (MMP9) and prolylendopeptidase (PREPL). Involved also in the biosynthesis of resolvin E1 and 18S-resolvin E1 from eicosapentaenoic acid, two lipid mediators that show potent anti-inflammatory and pro-resolving actions. The chain is Leukotriene A-4 hydrolase (LTA4H) from Cavia porcellus (Guinea pig).